The primary structure comprises 391 residues: Heme A synthase (391 aa).

8 helical membrane-spanning segments follow: residues 37–57, 121–141, 152–172, 186–206, 229–249, 298–318, 332–352, and 354–374; these read IRLW…VGGL, RQLG…FLAA, LLAL…MVAS, LATH…QALL, TTVL…VAGI, FLHR…WIFG, LLAM…LSAA, and WQVA…ILHA. His300 provides a ligand contact to heme. His360 is a binding site for heme.

Belongs to the COX15/CtaA family. Type 2 subfamily. As to quaternary structure, interacts with CtaB. It depends on heme b as a cofactor.

The protein resides in the cell membrane. The catalysed reaction is Fe(II)-heme o + 2 A + H2O = Fe(II)-heme a + 2 AH2. The protein operates within porphyrin-containing compound metabolism; heme A biosynthesis; heme A from heme O: step 1/1. Its function is as follows. Catalyzes the conversion of heme O to heme A by two successive hydroxylations of the methyl group at C8. The first hydroxylation forms heme I, the second hydroxylation results in an unstable dihydroxymethyl group, which spontaneously dehydrates, resulting in the formyl group of heme A. The polypeptide is Heme A synthase (Cereibacter sphaeroides (strain KD131 / KCTC 12085) (Rhodobacter sphaeroides)).